We begin with the raw amino-acid sequence, 142 residues long: MVLSAADKGHVKGIWGKVGGHAGEYAAEGLERTFHSFPTTKTYFPHFDLSHGSAQIQAHGKKIADALGQAVEHIDDLPGTLSKLSDLHAHKLRVDPVNFKLLSHCLLVTFAAHLGDAFTPEVHASLDKFLAAVSTVLTSKYR.

Residues 2-142 (VLSAADKGHV…VSTVLTSKYR (141 aa)) form the Globin domain. S4 is subject to Phosphoserine. Residues K8 and K12 each carry the N6-succinyllysine modification. At K17 the chain carries N6-acetyllysine; alternate. Residue K17 is modified to N6-succinyllysine; alternate. Y25 is subject to Phosphotyrosine. A Phosphoserine modification is found at S36. K41 carries the N6-succinyllysine modification. S50 carries the post-translational modification Phosphoserine. H59 contributes to the O2 binding site. Residue H88 participates in heme b binding. S103 bears the Phosphoserine mark. Residue T109 is modified to Phosphothreonine. S125 bears the Phosphoserine mark. T135 and T138 each carry phosphothreonine. S139 bears the Phosphoserine mark.

Belongs to the globin family. Heterotetramer of two alpha chains and two beta chains. As to expression, red blood cells.

Functionally, involved in oxygen transport from the lung to the various peripheral tissues. Hemopressin acts as an antagonist peptide of the cannabinoid receptor CNR1. Hemopressin-binding efficiently blocks cannabinoid receptor CNR1 and subsequent signaling. The polypeptide is Hemoglobin subunit alpha (HBA) (Notamacropus eugenii (Tammar wallaby)).